The chain runs to 178 residues: Conodipine-P3 (178 aa).

The first 24 residues, 1–24 (MKLLAPVLWAMAALGVTWLVAVDS), serve as a signal peptide directing secretion. A 4-hydroxyproline modification is found at Pro-38. A 4-hydroxyproline; partial mark is found at Pro-42 and Pro-49. His-54 is a catalytic residue. Residues 98–130 (KREVTSHRATSIAHSRLWKTALDQKSFLNRKAR) constitute a propeptide, interchain peptide. A Pyrrolidone carboxylic acid modification is found at Gln-131. Pro-137 bears the 4-hydroxyproline; partial mark.

It belongs to the phospholipase A2 family. Group IX subfamily. In terms of assembly, heterodimer of an alpha and a beta chain; probably disulfide-linked. It depends on Ca(2+) as a cofactor. In terms of tissue distribution, expressed by the venom duct.

The protein localises to the secreted. It catalyses the reaction a 1,2-diacyl-sn-glycero-3-phosphocholine + H2O = a 1-acyl-sn-glycero-3-phosphocholine + a fatty acid + H(+). In terms of biological role, catalyzes the calcium-dependent hydrolysis of the 2-acyl groups in 3-sn-phosphoglycerides. The chain is Conodipine-P3 from Conus purpurascens (Purple cone).